We begin with the raw amino-acid sequence, 400 residues long: Nicotinate phosphoribosyltransferase (400 aa).

His220 carries the post-translational modification Phosphohistidine; by autocatalysis.

The protein belongs to the NAPRTase family. In terms of processing, transiently phosphorylated on a His residue during the reaction cycle. Phosphorylation strongly increases the affinity for substrates and increases the rate of nicotinate D-ribonucleotide production. Dephosphorylation regenerates the low-affinity form of the enzyme, leading to product release.

It carries out the reaction nicotinate + 5-phospho-alpha-D-ribose 1-diphosphate + ATP + H2O = nicotinate beta-D-ribonucleotide + ADP + phosphate + diphosphate. It functions in the pathway cofactor biosynthesis; NAD(+) biosynthesis; nicotinate D-ribonucleotide from nicotinate: step 1/1. Its function is as follows. Catalyzes the synthesis of beta-nicotinate D-ribonucleotide from nicotinate and 5-phospho-D-ribose 1-phosphate at the expense of ATP. This chain is Nicotinate phosphoribosyltransferase, found in Shigella boydii serotype 18 (strain CDC 3083-94 / BS512).